A 569-amino-acid chain; its full sequence is Thiol:disulfide interchange protein DsbD (569 aa).

The N-terminal stretch at 1 to 19 (MAQRILTLILLLCSTSAFA) is a signal peptide. 2 disulfide bridges follow: Cys-122–Cys-128 and Cys-187–Cys-309. 7 helical membrane-spanning segments follow: residues 168-188 (LPFSALWALLIGIGIAFTPCV), 213-233 (LLTFIYVQGMALTYTALGLVV), 248-268 (YVLIGLALVFTLLALSMFGLF), 301-321 (IAGLICSPCTTAPLSAILLYI), 328-348 (WLGGGTLYLYALGMGLPLILI), 362-382 (WMEHVKTAFGFVILALPVFLL), and 391-411 (GLRLWSLLGVAFFGWAFITSL). The Thioredoxin domain maps to 430–569 (LVSVRPLQDW…FSAHLRDRQP (140 aa)). Cys-484 and Cys-487 are disulfide-bonded.

The protein belongs to the thioredoxin family. DsbD subfamily.

It localises to the cell inner membrane. It catalyses the reaction [protein]-dithiol + NAD(+) = [protein]-disulfide + NADH + H(+). It carries out the reaction [protein]-dithiol + NADP(+) = [protein]-disulfide + NADPH + H(+). In terms of biological role, required to facilitate the formation of correct disulfide bonds in some periplasmic proteins and for the assembly of the periplasmic c-type cytochromes. Acts by transferring electrons from cytoplasmic thioredoxin to the periplasm. This transfer involves a cascade of disulfide bond formation and reduction steps. The chain is Thiol:disulfide interchange protein DsbD from Citrobacter koseri (strain ATCC BAA-895 / CDC 4225-83 / SGSC4696).